Reading from the N-terminus, the 128-residue chain is Large ribosomal subunit protein bL12 (128 aa).

The protein belongs to the bacterial ribosomal protein bL12 family. In terms of assembly, homodimer. Part of the ribosomal stalk of the 50S ribosomal subunit. Forms a multimeric L10(L12)X complex, where L10 forms an elongated spine to which 2 to 4 L12 dimers bind in a sequential fashion. Binds GTP-bound translation factors.

In terms of biological role, forms part of the ribosomal stalk which helps the ribosome interact with GTP-bound translation factors. Is thus essential for accurate translation. The chain is Large ribosomal subunit protein bL12 from Corynebacterium kroppenstedtii (strain DSM 44385 / JCM 11950 / CIP 105744 / CCUG 35717).